The chain runs to 328 residues: Putative glycosyltransferase 41 (328 aa).

Belongs to the glycosyltransferase group 1 family. Glycosyltransferase 4 subfamily.

In Sulfolobus islandicus filamentous virus (isolate Iceland/Hveragerdi) (SIFV), this protein is Putative glycosyltransferase 41 (SIFV0041).